The following is a 316-amino-acid chain: Taste receptor type 2 member 3 (316 aa).

Residues 1 to 7 (MLGFTEG) are Extracellular-facing. A helical transmembrane segment spans residues 8–28 (IFLVLTVTEFILGNLVNGFIV). The Cytoplasmic segment spans residues 29 to 50 (SVNGSHWFKSKKISLSDFIITS). Residues 51–71 (LALFRIFLLWIIFTDSLIIVF) form a helical membrane-spanning segment. Over 72 to 86 (SYHTHDSGIRMQLID) the chain is Extracellular. The helical transmembrane segment at 87 to 107 (VFWTFTNHFSIWLISCLSVFY) threads the bilayer. Topologically, residues 108–128 (CLKIATFSHPSFLWLKWRASR) are cytoplasmic. A helical membrane pass occupies residues 129–149 (VVVGMLWGALVLSCVCTMSLM). At 150-186 (NEFKIYSALTGSRDTQNMTEYIRLKRHEYNLMHVLGN) the chain is on the extracellular side. The N-linked (GlcNAc...) asparagine glycan is linked to N166. A helical membrane pass occupies residues 187-207 (LWKIPSLIVSLIAYFLLLLSL). Residues 208-234 (GKHTQQMQKYSVGSRDQSAEAHRRAMR) lie on the Cytoplasmic side of the membrane. Residues 235 to 255 (IILSFLLFFLFYFLSFVILSS) form a helical membrane-spanning segment. At 256-266 (SRFLPETKIAR) the chain is on the extracellular side. A helical transmembrane segment spans residues 267–287 (IIGVVITMSYLVGDSLILILG). The Cytoplasmic portion of the chain corresponds to 288–316 (NNKLKQTFVAILPCECGHPKPGSKRFFAS).

The protein belongs to the G-protein coupled receptor T2R family.

Its subcellular location is the membrane. Gustducin-coupled receptor implicated in the perception of bitter compounds in the oral cavity and the gastrointestinal tract. Signals through PLCB2 and the calcium-regulated cation channel TRPM5. This chain is Taste receptor type 2 member 3, found in Rattus norvegicus (Rat).